Reading from the N-terminus, the 471-residue chain is UDP-glycosyltransferase CGT (471 aa).

His-24 acts as the Proton acceptor in catalysis. Position 24 (His-24) interacts with an anthocyanidin. Residue Asp-120 is the Charge relay of the active site. Thr-143 provides a ligand contact to UDP-alpha-D-glucose. Positions 280–281 (SR) are UDP. The UDP-alpha-D-glucose site is built by Val-343, Gln-345, His-360, Trp-363, Asn-364, Ser-365, and Glu-368. Gly-383 contacts an anthocyanidin. Positions 384 and 385 each coordinate UDP-alpha-D-glucose.

The protein belongs to the UDP-glycosyltransferase family.

The enzyme catalyses a 3'-hydro-2'-hydroxy-beta-oxodihydrochalcone + UDP-alpha-D-glucose = a 3'-(beta-D-glucopyranosyl)-2'-hydroxy-beta-oxodihydrochalcone + UDP + H(+). In terms of biological role, UDP-glucose-dependent glucosyltransferase catalyzing the c-glucosylation of 2-hydroxyflavanones. Acts preferentially on the dibenzoylmethane tautomers formed in equilibrium with 2-hydroxyflavanones. No activity with naringenin or naringenin chalcone. This is UDP-glycosyltransferase CGT from Oryza sativa subsp. indica (Rice).